Reading from the N-terminus, the 140-residue chain is Histone H2B (140 aa).

Residues 1 to 47 (MPPKAQKTPTTGGKAPAGKAPVEKKEAGKKTAAPSGEKKKRTKTRKE) are disordered. Lysine 7 carries the post-translational modification N6-acetyllysine; alternate. Residue lysine 7 forms a Glycyl lysine isopeptide (Lys-Gly) (interchain with G-Cter in SUMO); alternate linkage. Lysine 14 carries the N6-acetyllysine modification. At lysine 24 the chain carries N6-acetyllysine; alternate. A Glycyl lysine isopeptide (Lys-Gly) (interchain with G-Cter in SUMO); alternate cross-link involves residue lysine 24. A Glycyl lysine isopeptide (Lys-Gly) (interchain with G-Cter in SUMO) cross-link involves residue lysine 25. Residue lysine 134 forms a Glycyl lysine isopeptide (Lys-Gly) (interchain with G-Cter in ubiquitin) linkage.

Belongs to the histone H2B family. The nucleosome is a histone octamer containing two molecules each of H2A, H2B, H3 and H4 assembled in one H3-H4 heterotetramer and two H2A-H2B heterodimers. The octamer wraps approximately 147 bp of DNA. In terms of processing, monoubiquitinated by BRE1 to form H2BK123ub1. H2BK123ub1 gives a specific tag for epigenetic transcriptional activation and is also prerequisite for H3K4me and H3K79me formation. H2BK123ub1 also modulates the formation of double-strand breaks during meiosis and is a prerequisite for DNA-damage checkpoint activation. Post-translationally, acetylated by GCN5 to form H2BK11ac and H2BK16ac. H2BK16ac can also be formed by ESA1. Acetylation of N-terminal lysines and particularly formation of H2BK11acK16ac has a positive effect on transcription. Sumoylation to form H2BK6su and probably also H2BK16su or H2BK17su, occurs preferentially near the telomeres and represses gene transcription.

The protein localises to the nucleus. It localises to the chromosome. In terms of biological role, core component of nucleosome. Nucleosomes wrap and compact DNA into chromatin, limiting DNA accessibility to the cellular machineries which require DNA as a template. Histones thereby play a central role in transcription regulation, DNA repair, DNA replication and chromosomal stability. DNA accessibility is regulated via a complex set of post-translational modifications of histones, also called histone code, and nucleosome remodeling. This chain is Histone H2B (HTB1), found in Phaeosphaeria nodorum (strain SN15 / ATCC MYA-4574 / FGSC 10173) (Glume blotch fungus).